The sequence spans 390 residues: Manganese peroxidase 2 (390 aa).

An N-terminal signal peptide occupies residues 1 to 23 (MAFNFAAILAFVSLAAVTSAAPS). 5 disulfides stabilise this stretch: Cys-27–Cys-39, Cys-38–Cys-313, Cys-57–Cys-141, Cys-277–Cys-343, and Cys-365–Cys-372. Residues Glu-59 and Glu-63 each coordinate Mn(2+). Catalysis depends on His-70, which acts as the Proton acceptor. Positions 71, 86, 88, and 90 each coordinate Ca(2+). An N-linked (GlcNAc...) asparagine glycan is attached at Asn-155. His-197 contributes to the heme b binding site. Ser-198 lines the Ca(2+) pocket. A Mn(2+)-binding site is contributed by Asp-203. Ca(2+)-binding residues include Asp-215, Thr-217, and Asp-222. N-linked (GlcNAc...) asparagine glycosylation is present at Asn-241.

The protein belongs to the peroxidase family. Ligninase subfamily. Heme b is required as a cofactor. It depends on Ca(2+) as a cofactor.

It is found in the secreted. It carries out the reaction 2 Mn(2+) + H2O2 + 2 H(+) = 2 Mn(3+) + 2 H2O. Catalyzes the oxidation of Mn(2+) to Mn(3+). The latter, acting as a diffusible redox mediator, is capable of oxidizing a variety of lignin compounds. The protein is Manganese peroxidase 2 (mnp2) of Phlebia radiata (White-rot fungus).